Consider the following 306-residue polypeptide: Protoheme IX farnesyltransferase (306 aa).

9 helical membrane-spanning segments follow: residues 35-55 (LIVF…PTWL), 61-81 (LIAC…NCLV), 106-126 (LTLA…YVWV), 129-149 (LTMW…TVIL), 157-177 (IVIG…AMTG), 183-203 (ALIL…ALAL), 224-244 (EFTR…CLMP), 245-265 (FIFK…SIGF), and 286-306 (RFSL…HYLI).

This sequence belongs to the UbiA prenyltransferase family. Protoheme IX farnesyltransferase subfamily.

It localises to the cell inner membrane. It catalyses the reaction heme b + (2E,6E)-farnesyl diphosphate + H2O = Fe(II)-heme o + diphosphate. It participates in porphyrin-containing compound metabolism; heme O biosynthesis; heme O from protoheme: step 1/1. Its function is as follows. Converts heme B (protoheme IX) to heme O by substitution of the vinyl group on carbon 2 of heme B porphyrin ring with a hydroxyethyl farnesyl side group. The chain is Protoheme IX farnesyltransferase from Polaromonas naphthalenivorans (strain CJ2).